The chain runs to 312 residues: 2-aminophenol 1,6-dioxygenase subunit beta (312 aa).

The Fe cation site is built by His13, His62, and Glu251.

It belongs to the LigB/MhpB extradiol dioxygenase family. The APD complex is a heterotetramer of 2 alpha (CnbCa) and 2 beta (CnbCb) subunits. The cofactor is Fe(2+).

The enzyme catalyses 2-aminophenol + O2 = 2-aminomuconate 6-semialdehyde. The catalysed reaction is 2-amino-5-chlorophenol + O2 = 2-amino-5-chloromuconate 6-semialdehyde. The protein operates within xenobiotic degradation; nitrobenzene degradation. Its pathway is xenobiotic degradation; 4-chloronitrobenzene degradation. Complete loss of activity in the presence of Ni(2+), Co(2+), Cd(2+), Zn(2+) and hydrogen peroxide, however activity with hydrogen peroxide partially restored upon addition of excess ascorbate. Partially inhibited by Fe(2+), Mg(2+), Ca(2+), Mn(2+), Cu(2+) and also by EDTA, at 2 mM concentration. Total activity inhibited in the presence of catechol or 4-nitrocatechol but completely restored after removal of catechol and addition of 2 mM Fe(2+) and 5 mM ascorbate. In terms of biological role, component of the 2-aminophenol 1,6-dioxygenase (APD) complex that catalyzes the ring fission of 2-aminophenol to produce 2-aminomuconic semialdehyde. CnbCb seems to be the catalytic subunit of the complex. Also active on other substrates such as 2-amino-5-chlorophenol (68% activity), protocatechuate (33% activity) and catechol (5% activity). Both 2-aminophenol and 2-amino-5-cholorophenol are likely native substrates for this dioxygenase which is involved in the reductive degradation pathway of both nitrobenzene (NB) and 4-chloronitrobenzene (4-CNB), allowing C.testosteroni strain CNB-1 to grow on these compounds as sole source of carbon, nitrogen, and energy. The sequence is that of 2-aminophenol 1,6-dioxygenase subunit beta from Comamonas testosteroni (Pseudomonas testosteroni).